The sequence spans 1032 residues: Phosphoenolpyruvate carboxylase 4 (1032 aa).

His154 is a catalytic residue. Residues 377–407 (PNLQKQNEQDFSESDWEKIDNGSRSGLTSRG) form a disordered region. The span at 398–407 (GSRSGLTSRG) shows a compositional bias: polar residues. The active site involves Lys699.

The protein belongs to the PEPCase type 1 family. Homotetramer. Mg(2+) is required as a cofactor. In terms of tissue distribution, expressed at low levels in flowers and siliques, and detectable in roots.

It is found in the cytoplasm. It carries out the reaction oxaloacetate + phosphate = phosphoenolpyruvate + hydrogencarbonate. Through the carboxylation of phosphoenolpyruvate (PEP) it forms oxaloacetate, a four-carbon dicarboxylic acid source for the tricarboxylic acid cycle. This chain is Phosphoenolpyruvate carboxylase 4 (PPC4), found in Arabidopsis thaliana (Mouse-ear cress).